The sequence spans 298 residues: Protoheme IX farnesyltransferase (298 aa).

9 consecutive transmembrane segments (helical) span residues 19–39 (VMSL…QPVN), 40–60 (PFVA…SGAL), 91–111 (LAVG…GGNW), 112–132 (FAAG…TIWL), 140–160 (IVIG…LPTG), 167–187 (LLMF…LALF), 213–233 (IFAY…TSVG), 236–256 (LYLA…WQIL), and 277–297 (LSLY…WVGG).

The protein belongs to the UbiA prenyltransferase family. Protoheme IX farnesyltransferase subfamily. As to quaternary structure, interacts with CtaA.

Its subcellular location is the cell inner membrane. The enzyme catalyses heme b + (2E,6E)-farnesyl diphosphate + H2O = Fe(II)-heme o + diphosphate. It participates in porphyrin-containing compound metabolism; heme O biosynthesis; heme O from protoheme: step 1/1. In terms of biological role, converts heme B (protoheme IX) to heme O by substitution of the vinyl group on carbon 2 of heme B porphyrin ring with a hydroxyethyl farnesyl side group. The chain is Protoheme IX farnesyltransferase from Paracoccus denitrificans.